A 237-amino-acid chain; its full sequence is Large ribosomal subunit protein uL1 (237 aa).

Belongs to the universal ribosomal protein uL1 family. As to quaternary structure, part of the 50S ribosomal subunit.

Functionally, binds directly to 23S rRNA. The L1 stalk is quite mobile in the ribosome, and is involved in E site tRNA release. Its function is as follows. Protein L1 is also a translational repressor protein, it controls the translation of the L11 operon by binding to its mRNA. In Solibacter usitatus (strain Ellin6076), this protein is Large ribosomal subunit protein uL1.